The sequence spans 377 residues: MAAAAQSRVVRVLSMSRSAITAIATSVCHGPPCRQLHHALIPHGKGGRSSVSGIVATVFGATGFLGRYVVNHLGRMGSQVIIPYRCDKYDIMHLRPMGDLGQLLFLEWDARDKDSIRRVVQHSNVVINLIGRDWETKNFDFEDVFVKIPQAIAQLSKEAGVEKFIHVSHLNANIKSSSRYLRNKAVGEKVVRDAFPEAIIIKPSDIFGREDRFLNSFASMHRFGPIPLGSLGWKTVKQPVYVVDVSKGIVNAVKDPDANGKSFAFVGPSRYLLFHLVKYIFAVAHRLFLPFPLPLFAYRWVARVFEISPFEPWITRDKVERMHITDMKLPHLPGLEDLGIQATPLELKAIEVLRRHRTYRWLSAEIEDVKPAKTVNI.

Residues 1-35 constitute a mitochondrion transit peptide; that stretch reads MAAAAQSRVVRVLSMSRSAITAIATSVCHGPPCRQ. Lys175 bears the N6-succinyllysine mark. N6-acetyllysine is present on residues Lys189 and Lys370.

The protein belongs to the complex I NDUFA9 subunit family. As to quaternary structure, complex I is composed of 45 different subunits. This a component of the hydrophobic protein fraction. Interacts with BLOC1S1. Interacts with SLC2A4. Interacts with CLOCK. Interacts with RAB5IF. Requires FAD as cofactor. Post-translationally, acetylated on lysine residues. BLOC1S1 is required for acetylation.

It localises to the mitochondrion matrix. In terms of biological role, accessory subunit of the mitochondrial membrane respiratory chain NADH dehydrogenase (Complex I), that is believed not to be involved in catalysis. Complex I functions in the transfer of electrons from NADH to the respiratory chain. The immediate electron acceptor for the enzyme is believed to be ubiquinone. This is NADH dehydrogenase [ubiquinone] 1 alpha subcomplex subunit 9, mitochondrial (NDUFA9) from Gorilla gorilla gorilla (Western lowland gorilla).